The chain runs to 179 residues: Large ribosomal subunit protein uL6 (179 aa).

The protein belongs to the universal ribosomal protein uL6 family. In terms of assembly, part of the 50S ribosomal subunit.

In terms of biological role, this protein binds to the 23S rRNA, and is important in its secondary structure. It is located near the subunit interface in the base of the L7/L12 stalk, and near the tRNA binding site of the peptidyltransferase center. The polypeptide is Large ribosomal subunit protein uL6 (Metamycoplasma arthritidis (strain 158L3-1) (Mycoplasma arthritidis)).